A 375-amino-acid chain; its full sequence is DNA replication and repair protein RecF (375 aa).

Residue 30 to 37 (GENAQGKT) coordinates ATP.

It belongs to the RecF family.

It localises to the cytoplasm. Functionally, the RecF protein is involved in DNA metabolism; it is required for DNA replication and normal SOS inducibility. RecF binds preferentially to single-stranded, linear DNA. It also seems to bind ATP. The protein is DNA replication and repair protein RecF of Enterococcus faecalis (strain ATCC 700802 / V583).